Consider the following 411-residue polypeptide: Metacaspase-1B (411 aa).

Residues 1–97 are disordered; it reads MYHRHSAPPP…PPLEAQQFGN (97 aa). Residues 7 to 65 are compositionally biased toward pro residues; it reads APPPPGRSRGYPPPQQQWPPQPYQYLPYPPQGPPPAHTFPPPAHRSYPSPYPTPPPHSP. Catalysis depends on residues H198 and C254.

The protein belongs to the peptidase C14B family.

In terms of biological role, involved in cell death (apoptosis). This Neosartorya fischeri (strain ATCC 1020 / DSM 3700 / CBS 544.65 / FGSC A1164 / JCM 1740 / NRRL 181 / WB 181) (Aspergillus fischerianus) protein is Metacaspase-1B (casB).